A 109-amino-acid chain; its full sequence is Thiosulfate sulfurtransferase GlpE (109 aa).

Residues 16 to 104 (REQGAVVVDV…WRTTFPSETA (89 aa)) enclose the Rhodanese domain. The active-site Cysteine persulfide intermediate is C64.

This sequence belongs to the GlpE family.

The protein resides in the cytoplasm. The enzyme catalyses thiosulfate + hydrogen cyanide = thiocyanate + sulfite + 2 H(+). It carries out the reaction thiosulfate + [thioredoxin]-dithiol = [thioredoxin]-disulfide + hydrogen sulfide + sulfite + 2 H(+). Transferase that catalyzes the transfer of sulfur from thiosulfate to thiophilic acceptors such as cyanide or dithiols. May function in a CysM-independent thiosulfate assimilation pathway by catalyzing the conversion of thiosulfate to sulfite, which can then be used for L-cysteine biosynthesis. The protein is Thiosulfate sulfurtransferase GlpE of Pseudomonas fluorescens (strain Pf0-1).